We begin with the raw amino-acid sequence, 968 residues long: RNA polymerase-associated protein RapA (968 aa).

The Helicase ATP-binding domain occupies 164–334 (DVGRRHAPRV…FARLRLLDPN (171 aa)). 177 to 184 (DEVGLGKT) contacts ATP. Residues 280–283 (DEAH) carry the DEAH box motif. The 173-residue stretch at 490–662 (RVEWLMGYLT…YLASPDQTEG (173 aa)) folds into the Helicase C-terminal domain.

It belongs to the SNF2/RAD54 helicase family. RapA subfamily. Interacts with the RNAP. Has a higher affinity for the core RNAP than for the holoenzyme. Its ATPase activity is stimulated by binding to RNAP.

Functionally, transcription regulator that activates transcription by stimulating RNA polymerase (RNAP) recycling in case of stress conditions such as supercoiled DNA or high salt concentrations. Probably acts by releasing the RNAP, when it is trapped or immobilized on tightly supercoiled DNA. Does not activate transcription on linear DNA. Probably not involved in DNA repair. The sequence is that of RNA polymerase-associated protein RapA from Shigella flexneri serotype 5b (strain 8401).